The primary structure comprises 347 residues: NADH-quinone oxidoreductase subunit H (347 aa).

The next 8 helical transmembrane spans lie at 25–45, 95–115, 128–148, 168–188, 200–220, 251–271, 284–304, and 324–344; these read ILFM…VAAM, FMFT…FAII, IGIL…LFGG, ISYE…TGSF, GWYI…GVAV, FFIG…CLFF, FIPP…MFVL, and VCLP…LIFS.

This sequence belongs to the complex I subunit 1 family. NDH-1 is composed of 14 different subunits. Subunits NuoA, H, J, K, L, M, N constitute the membrane sector of the complex.

It localises to the cell inner membrane. It catalyses the reaction a quinone + NADH + 5 H(+)(in) = a quinol + NAD(+) + 4 H(+)(out). In terms of biological role, NDH-1 shuttles electrons from NADH, via FMN and iron-sulfur (Fe-S) centers, to quinones in the respiratory chain. The immediate electron acceptor for the enzyme in this species is believed to be ubiquinone. Couples the redox reaction to proton translocation (for every two electrons transferred, four hydrogen ions are translocated across the cytoplasmic membrane), and thus conserves the redox energy in a proton gradient. This subunit may bind ubiquinone. This is NADH-quinone oxidoreductase subunit H from Psychrobacter cryohalolentis (strain ATCC BAA-1226 / DSM 17306 / VKM B-2378 / K5).